Reading from the N-terminus, the 371-residue chain is Aminomethyltransferase (371 aa).

This sequence belongs to the GcvT family. The glycine cleavage system is composed of four proteins: P, T, L and H.

The enzyme catalyses N(6)-[(R)-S(8)-aminomethyldihydrolipoyl]-L-lysyl-[protein] + (6S)-5,6,7,8-tetrahydrofolate = N(6)-[(R)-dihydrolipoyl]-L-lysyl-[protein] + (6R)-5,10-methylene-5,6,7,8-tetrahydrofolate + NH4(+). Functionally, the glycine cleavage system catalyzes the degradation of glycine. This chain is Aminomethyltransferase, found in Oceanobacillus iheyensis (strain DSM 14371 / CIP 107618 / JCM 11309 / KCTC 3954 / HTE831).